Reading from the N-terminus, the 208-residue chain is Small ribosomal subunit protein eS8 (208 aa).

Residues 1-27 (MGISRDNWHKRRKTGGKRKPYHKKRKY) are disordered. Gly-2 carries the N-myristoyl glycine lipid modification. Residues 8–26 (WHKRRKTGGKRKPYHKKRK) show a composition bias toward basic residues. Lys-37 and Lys-128 each carry N6-acetyllysine. Residue Thr-130 is modified to Phosphothreonine. At Ser-160 the chain carries Phosphoserine. Residues Lys-170 and Lys-193 each participate in a glycyl lysine isopeptide (Lys-Gly) (interchain with G-Cter in SUMO2) cross-link.

It belongs to the eukaryotic ribosomal protein eS8 family. Component of the small ribosomal subunit. Identified in a IGF2BP1-dependent mRNP granule complex containing untranslated mRNAs. Part of the small subunit (SSU) processome, composed of more than 70 proteins and the RNA chaperone small nucleolar RNA (snoRNA) U3.

It is found in the cytoplasm. The protein resides in the membrane. Its subcellular location is the nucleus. It localises to the nucleolus. Functionally, component of the small ribosomal subunit. The ribosome is a large ribonucleoprotein complex responsible for the synthesis of proteins in the cell. Part of the small subunit (SSU) processome, first precursor of the small eukaryotic ribosomal subunit. During the assembly of the SSU processome in the nucleolus, many ribosome biogenesis factors, an RNA chaperone and ribosomal proteins associate with the nascent pre-rRNA and work in concert to generate RNA folding, modifications, rearrangements and cleavage as well as targeted degradation of pre-ribosomal RNA by the RNA exosome. The polypeptide is Small ribosomal subunit protein eS8 (RPS8) (Oryctolagus cuniculus (Rabbit)).